The following is a 507-amino-acid chain: MTDDPGSGFTTVWNAVVSELNGDPKVDDGPSSDANLSAPLTPQQRAWLNLVQPLTIVEGFALLSVPSSFVQNEIERHLRAPITDALSRRLGHQIQLGVRIAPPATDEADDTTVPPSENPATTSPDTTTDNDEIDDSAAARGDNQHSWPSYFTERPRNTDSATAGVTSLNRRYTFDTFVIGASNRFAHAAALAIAEAPARAYNPLFIWGESGLGKTHLLHAAGNYAQRLFPGMRVKYVSTEEFTNDFINSLRDDRKVAFKRSYRDVDVLLVDDIQFIEGKEGIQEEFFHTFNTLHNANKQIVISSDRPPKQLATLEDRLRTRFEWGLITDVQPPELETRIAILRKKAQMERLAIPDDVLELIASSIERNIRELEGALIRVTAFASLNKTPIDKALAEIVLRDLIADANTMQISAATIMAATAEYFDTTVEELRGPGKTRALAQSRQIAMYLCRELTDLSLPKIGQAFGRDHTTVMYAQRKILSEMAERREVFDHVKELTTRIRQRSKR.

The interval 1 to 112 is domain I, interacts with DnaA modulators; the sequence is MTDDPGSGFT…PATDEADDTT (112 aa). Residues 99–162 are disordered; it reads RIAPPATDEA…ERPRNTDSAT (64 aa). Polar residues predominate over residues 113-127; the sequence is VPPSENPATTSPDTT. A domain II region spans residues 113–166; it reads VPPSENPATTSPDTTTDNDEIDDSAAARGDNQHSWPSYFTERPRNTDSATAGVT. Residues 167 to 383 are domain III, AAA+ region; the sequence is SLNRRYTFDT…GALIRVTAFA (217 aa). 4 residues coordinate ATP: Gly211, Gly213, Lys214, and Thr215. Residues 384 to 507 are domain IV, binds dsDNA; sequence SLNKTPIDKA…TTRIRQRSKR (124 aa).

The protein belongs to the DnaA family. Oligomerizes as a right-handed, spiral filament on DNA at oriC.

Its subcellular location is the cytoplasm. Functionally, plays an essential role in the initiation and regulation of chromosomal replication. ATP-DnaA binds to the origin of replication (oriC) to initiate formation of the DNA replication initiation complex once per cell cycle. Binds the DnaA box (a 9 base pair repeat at the origin) and separates the double-stranded (ds)DNA. Forms a right-handed helical filament on oriC DNA; dsDNA binds to the exterior of the filament while single-stranded (ss)DNA is stabiized in the filament's interior. The ATP-DnaA-oriC complex binds and stabilizes one strand of the AT-rich DNA unwinding element (DUE), permitting loading of DNA polymerase. After initiation quickly degrades to an ADP-DnaA complex that is not apt for DNA replication. Binds acidic phospholipids. The chain is Chromosomal replication initiator protein DnaA from Mycobacterium bovis (strain ATCC BAA-935 / AF2122/97).